The primary structure comprises 857 residues: Leucine--tRNA ligase (857 aa).

The 'HIGH' region motif lies at 42–52 (PYPSGTLHMGH). The 'KMSKS' region motif lies at 616–620 (KMSKS). Lys-619 is an ATP binding site.

The protein belongs to the class-I aminoacyl-tRNA synthetase family.

The protein resides in the cytoplasm. It catalyses the reaction tRNA(Leu) + L-leucine + ATP = L-leucyl-tRNA(Leu) + AMP + diphosphate. The sequence is that of Leucine--tRNA ligase from Parasynechococcus marenigrum (strain WH8102).